Reading from the N-terminus, the 206-residue chain is RNA pyrophosphohydrolase (206 aa).

The Nudix hydrolase domain occupies 6 to 150; sequence GYRPNVGIVI…KRDVYRKVMK (145 aa). Positions 38 to 59 match the Nudix box motif; it reads GGINEGENIETAMYRELYEEVG. Residues 162-191 show a composition bias toward basic and acidic residues; sequence KPETVEKPRVERTEKRDFQKRDNQKREFRK. Residues 162-206 are disordered; it reads KPETVEKPRVERTEKRDFQKRDNQKREFRKSARMWNNSHQKGKAQ.

This sequence belongs to the Nudix hydrolase family. RppH subfamily. The cofactor is a divalent metal cation.

Accelerates the degradation of transcripts by removing pyrophosphate from the 5'-end of triphosphorylated RNA, leading to a more labile monophosphorylated state that can stimulate subsequent ribonuclease cleavage. The polypeptide is RNA pyrophosphohydrolase (Actinobacillus pleuropneumoniae serotype 7 (strain AP76)).